We begin with the raw amino-acid sequence, 169 residues long: Cytochrome c-type biogenesis protein CcmE (169 aa).

At 1 to 7 (MTRKSRR) the chain is on the cytoplasmic side. A helical; Signal-anchor for type II membrane protein transmembrane segment spans residues 8 to 28 (LILIAACGAVLALALGLILSA). Topologically, residues 29-169 (MSGSIVFFRS…DATLGQRSER (141 aa)) are periplasmic. The heme site is built by histidine 122 and tyrosine 126. The disordered stretch occupies residues 135-169 (LKAQGRWQEGGGKEAPKDAAKPASADATLGQRSER). Over residues 145–154 (GGKEAPKDAA) the composition is skewed to basic and acidic residues.

It belongs to the CcmE/CycJ family.

Its subcellular location is the cell inner membrane. Functionally, heme chaperone required for the biogenesis of c-type cytochromes. Transiently binds heme delivered by CcmC and transfers the heme to apo-cytochromes in a process facilitated by CcmF and CcmH. The sequence is that of Cytochrome c-type biogenesis protein CcmE from Methylorubrum populi (strain ATCC BAA-705 / NCIMB 13946 / BJ001) (Methylobacterium populi).